The following is a 127-amino-acid chain: Fluoride-specific ion channel FluC (127 aa).

The next 4 membrane-spanning stretches (helical) occupy residues Phe4 to Val24, Tyr38 to Phe58, Val71 to Val91, and Leu104 to Leu124. 2 residues coordinate Na(+): Gly78 and Thr81.

The protein belongs to the fluoride channel Fluc/FEX (TC 1.A.43) family.

The protein resides in the cell inner membrane. The enzyme catalyses fluoride(in) = fluoride(out). With respect to regulation, na(+) is not transported, but it plays an essential structural role and its presence is essential for fluoride channel function. In terms of biological role, fluoride-specific ion channel. Important for reducing fluoride concentration in the cell, thus reducing its toxicity. The protein is Fluoride-specific ion channel FluC of Vibrio parahaemolyticus serotype O3:K6 (strain RIMD 2210633).